The following is a 275-amino-acid chain: Phosphate import ATP-binding protein PstB 1 (275 aa).

The 240-residue stretch at 22–261 (IETRDLSVYY…DRTEKIFNSP (240 aa)) folds into the ABC transporter domain. 54–61 (GPSGCGKS) contacts ATP.

This sequence belongs to the ABC transporter superfamily. Phosphate importer (TC 3.A.1.7) family. As to quaternary structure, the complex is composed of two ATP-binding proteins (PstB), two transmembrane proteins (PstC and PstA) and a solute-binding protein (PstS).

The protein resides in the cell inner membrane. It catalyses the reaction phosphate(out) + ATP + H2O = ADP + 2 phosphate(in) + H(+). Functionally, part of the ABC transporter complex PstSACB involved in phosphate import. Responsible for energy coupling to the transport system. The sequence is that of Phosphate import ATP-binding protein PstB 1 from Synechococcus sp. (strain JA-3-3Ab) (Cyanobacteria bacterium Yellowstone A-Prime).